The chain runs to 404 residues: CCA-adding enzyme (404 aa).

Residues glycine 27 and arginine 30 each coordinate ATP. Glycine 27 and arginine 30 together coordinate CTP. Residues aspartate 40 and aspartate 42 each coordinate Mg(2+). Arginine 111, aspartate 154, arginine 157, arginine 160, and arginine 163 together coordinate ATP. Residues arginine 111, aspartate 154, arginine 157, arginine 160, and arginine 163 each coordinate CTP.

Belongs to the tRNA nucleotidyltransferase/poly(A) polymerase family. Bacterial CCA-adding enzyme type 3 subfamily. As to quaternary structure, homodimer. Requires Mg(2+) as cofactor.

It catalyses the reaction a tRNA precursor + 2 CTP + ATP = a tRNA with a 3' CCA end + 3 diphosphate. The catalysed reaction is a tRNA with a 3' CCA end + 2 CTP + ATP = a tRNA with a 3' CCACCA end + 3 diphosphate. Its function is as follows. Catalyzes the addition and repair of the essential 3'-terminal CCA sequence in tRNAs without using a nucleic acid template. Adds these three nucleotides in the order of C, C, and A to the tRNA nucleotide-73, using CTP and ATP as substrates and producing inorganic pyrophosphate. tRNA 3'-terminal CCA addition is required both for tRNA processing and repair. Also involved in tRNA surveillance by mediating tandem CCA addition to generate a CCACCA at the 3' terminus of unstable tRNAs. While stable tRNAs receive only 3'-terminal CCA, unstable tRNAs are marked with CCACCA and rapidly degraded. The sequence is that of CCA-adding enzyme from Geobacillus kaustophilus (strain HTA426).